Reading from the N-terminus, the 340-residue chain is Phenylalanine--tRNA ligase alpha subunit (340 aa).

Residue glutamate 255 participates in Mg(2+) binding.

Belongs to the class-II aminoacyl-tRNA synthetase family. Phe-tRNA synthetase alpha subunit type 1 subfamily. Tetramer of two alpha and two beta subunits. It depends on Mg(2+) as a cofactor.

The protein resides in the cytoplasm. It carries out the reaction tRNA(Phe) + L-phenylalanine + ATP = L-phenylalanyl-tRNA(Phe) + AMP + diphosphate + H(+). The chain is Phenylalanine--tRNA ligase alpha subunit from Heliobacterium modesticaldum (strain ATCC 51547 / Ice1).